The chain runs to 707 residues: E3 ubiquitin-protein ligase Praja-2 (707 aa).

Residues 1–10 show a composition bias toward basic and acidic residues; that stretch reads MSQYTEKEPS. Disordered regions lie at residues 1 to 32, 72 to 120, and 250 to 314; these read MSQY…QTIT, PKEN…PSIA, and QNGQ…VRPK. An N-acetylserine modification is found at serine 2. Polar residues-rich tracts occupy residues 74–83 and 109–119; these read ENTSGSSSLD and LNQSTESSPSI. The span at 257–276 shows a compositional bias: basic and acidic residues; sequence RSSEDGVVRKRRQDDTDQGR. Residues 293-308 are compositionally biased toward polar residues; it reads EQNTSDRANHHGSSPE. Residues serine 306 and serine 320 each carry the phosphoserine modification. A Phosphoserine; by PKA modification is found at serine 339. Disordered stretches follow at residues 379–405 and 424–493; these read RVTQ…QESR and EDSS…QTSL. The segment covering 381–390 has biased composition (basic and acidic residues); the sequence is TQRETERNRV. Threonine 385 carries the post-translational modification Phosphothreonine; by PKA. Residues 391–401 show a composition bias toward polar residues; that stretch reads TSENGATASGR. Serine 430 bears the Phosphoserine mark. Acidic residues predominate over residues 465–481; sequence NDPELQSDSSGPEEENQ. The span at 482–491 shows a compositional bias: polar residues; the sequence is ELSLQEGEQT. The tract at residues 530-707 is interaction with PRKAR1A, PRKAR2A and PRKAR2B; sequence DGNNNLEDDS…PANDNAEEAP (178 aa). A mediates interaction with TBC1D31 region spans residues 549–569; sequence WSLFDGFADGLGVAEAISYVD. The RING-type; atypical zinc finger occupies 633-674; it reads CPICCSEYIKDDIATELPCHHFFHKPCVSIWLQKSGTCPVCR. Residues 685–701 are compositionally biased toward low complexity; it reads SAAASSDPDPDASPAND. A disordered region spans residues 685–707; that stretch reads SAAASSDPDPDASPANDNAEEAP.

In terms of assembly, binds ubiquitin-conjugating enzymes (E2s). In vitro, interacts with the ubiquitin-conjugating enzyme, UBE2D2. The phosphorylated form interacts with PRKAR1A, PRKAR2A and PRKAR2B. Binds the catalytic subunits of cAMP-dependent protein kinase. Interacts with MFHAS1. Interacts with TBC1D31; the interaction is direct and recruits PJA2 to centrosomes.

It localises to the cytoplasm. The protein localises to the cell membrane. It is found in the endoplasmic reticulum membrane. Its subcellular location is the golgi apparatus membrane. The protein resides in the synapse. It localises to the postsynaptic density. The protein localises to the cytoskeleton. It is found in the microtubule organizing center. Its subcellular location is the centrosome. It carries out the reaction S-ubiquitinyl-[E2 ubiquitin-conjugating enzyme]-L-cysteine + [acceptor protein]-L-lysine = [E2 ubiquitin-conjugating enzyme]-L-cysteine + N(6)-ubiquitinyl-[acceptor protein]-L-lysine.. It participates in protein modification; protein ubiquitination. Functionally, has E2-dependent E3 ubiquitin-protein ligase activity. Responsible for ubiquitination of cAMP-dependent protein kinase type I and type II-alpha/beta regulatory subunits and for targeting them for proteasomal degradation. Essential for PKA-mediated long-term memory processes. Through the ubiquitination of MFHAS1, positively regulates the TLR2 signaling pathway that leads to the activation of the downstream p38 and JNK MAP kinases and promotes the polarization of macrophages toward the pro-inflammatory M1 phenotype. Plays a role in ciliogenesis by ubiquitinating OFD1. The chain is E3 ubiquitin-protein ligase Praja-2 (Pja2) from Mus musculus (Mouse).